The following is a 963-amino-acid chain: Ubiquitin carboxyl-terminal hydrolase 11 (963 aa).

The segment at 64-93 is disordered; that stretch reads VTEDREPQHEELPGLDSQWRQIENGESGRE. Residues 65–75 are compositionally biased toward basic and acidic residues; that stretch reads TEDREPQHEEL. Residues 76–184 enclose the DUSP domain; sequence PGLDSQWRQI…GQPPIERKVI (109 aa). Lys245 bears the N6-acetyllysine mark. Residues 309 to 930 enclose the USP domain; sequence CGLTNLGNTC…AAYVLFYQRQ (622 aa). Cys318 functions as the Nucleophile in the catalytic mechanism. Disordered regions lie at residues 644–691 and 716–735; these read TKPN…SGVT and LFTLQTVNSNGTSDRTTSPE. Ser648 is subject to Phosphoserine. The span at 649–665 shows a compositional bias: acidic residues; the sequence is DDEDDGDEKEDDEEDKD. A compositionally biased stretch (polar residues) spans 717-731; sequence FTLQTVNSNGTSDRT. Residue Ser733 is modified to Phosphoserine. The Proton acceptor role is filled by His888. A compositionally biased stretch (low complexity) spans 938 to 957; the sequence is SPAGSSGAPASPACSSPPSS. The tract at residues 938–963 is disordered; sequence SPAGSSGAPASPACSSPPSSEFMDVN. A Phosphoserine modification is found at Ser948.

This sequence belongs to the peptidase C19 family. In terms of assembly, monomer. Associated component of the Polycomb group (PcG) multiprotein PRC1-like complex. Interacts with RANBP9/RANBPM. Interacts with BRCA2. Interacts with CHUK/IKKA. Interacts with NFKBIA. Interacts with SPRY3, RAE1, MYCBP2/PAM, and KCTD6. (Microbial infection) Interacts with papilloma virus protein 16E7.

Its subcellular location is the nucleus. It is found in the cytoplasm. It localises to the chromosome. It catalyses the reaction Thiol-dependent hydrolysis of ester, thioester, amide, peptide and isopeptide bonds formed by the C-terminal Gly of ubiquitin (a 76-residue protein attached to proteins as an intracellular targeting signal).. Protease that can remove conjugated ubiquitin from target proteins and polyubiquitin chains. Inhibits the degradation of target proteins by the proteasome. Cleaves preferentially 'Lys-6' and 'Lys-63'-linked ubiquitin chains. Has lower activity with 'Lys-11' and 'Lys-33'-linked ubiquitin chains, and extremely low activity with 'Lys-27', 'Lys-29' and 'Lys-48'-linked ubiquitin chains (in vitro). Plays a role in the regulation of pathways leading to NF-kappa-B activation. Plays a role in the regulation of DNA repair after double-stranded DNA breaks. Acts as a chromatin regulator via its association with the Polycomb group (PcG) multiprotein PRC1-like complex; may act by deubiquitinating components of the PRC1-like complex. Promotes cell proliferation by deubiquitinating phosphorylated E2F1. The polypeptide is Ubiquitin carboxyl-terminal hydrolase 11 (USP11) (Homo sapiens (Human)).